Reading from the N-terminus, the 406-residue chain is Probable UDP-arabinose 4-epimerase 3 (406 aa).

The Cytoplasmic portion of the chain corresponds to 1–26 (MIPLNRRASQTRGGMEYFDARRKPHN). The helical; Signal-anchor for type II membrane protein transmembrane segment at 27 to 44 (VGKVIAALVLTTLCIFIL) threads the bilayer. The Lumenal segment spans residues 45–406 (KQSPGFGGSS…KSHPRGYGSN (362 aa)). 65 to 96 (HVLVTGGAGYIGSHASLRLLKDNYRVTIVDNL) lines the NAD(+) pocket. Residue tyrosine 213 is the Proton acceptor of the active site.

The protein belongs to the NAD(P)-dependent epimerase/dehydratase family. The cofactor is NAD(+).

It localises to the golgi apparatus. It is found in the golgi stack membrane. The enzyme catalyses UDP-beta-L-arabinopyranose = UDP-alpha-D-xylose. It participates in nucleotide-sugar biosynthesis; UDP-L-arabinose biosynthesis; UDP-L-arabinose from UDP-alpha-D-xylose: step 1/1. The protein operates within cell wall biogenesis; cell wall polysaccharide biosynthesis. The polypeptide is Probable UDP-arabinose 4-epimerase 3 (UEL-3) (Oryza sativa subsp. japonica (Rice)).